Consider the following 541-residue polypeptide: Zinc finger protein 513 (541 aa).

The segment at 1-118 is disordered; it reads MPRRKQSHPQ…GEARGERPGP (118 aa). Residues 44–57 show a composition bias toward acidic residues; that stretch reads LEFEEEEEEEEGDG. Phosphoserine is present on residues S85 and S96. The span at 103–115 shows a compositional bias: basic and acidic residues; it reads EPARGPGEARGER. 8 consecutive C2H2-type zinc fingers follow at residues 150–172, 178–200, 206–228, 360–382, 388–410, 416–438, 444–466, and 472–494; these read YSCR…MQTH, FRCG…TRTH, YRCP…QRTH, FACS…MKTH, FRCA…QRVH, YKCP…GRIH, FRCS…MLRH, and FRCA…QKVH. The interval 492 to 541 is disordered; that stretch reads KVHGHGGAGGPGLSASEGWAPPHSPPSVLSSRGPPALGTAGSRAVHTDSS.

The protein belongs to the krueppel C2H2-type zinc-finger protein family. Binds DNA. Can associate with the proximal promoter regions of PAX6 and SP4, and their known targets including ARR3, RHO, OPN1MW2 and OPN1SW. As to expression, in the retina, expressed in the outer and inner nuclear layers, and the ganglion cell layer.

The protein localises to the nucleus. Functionally, transcriptional regulator that plays a role in retinal development and maintenance. This is Zinc finger protein 513 (ZNF513) from Homo sapiens (Human).